Here is a 352-residue protein sequence, read N- to C-terminus: Thiamine-phosphate synthase (352 aa).

Residues 1–128 (MNPTPSETSL…AAEAAAIRYG (128 aa)) are unknown. Residues 63 to 85 (SYKQARSTSTDTGAGLKHPAQLD) form a disordered region. A thiamine-phosphate synthase region spans residues 129–352 (LYDLEVTCLN…LLQQLDQATI (224 aa)). 4-amino-2-methyl-5-(diphosphooxymethyl)pyrimidine is bound by residues 180–184 (QYRCK) and Asn212. Mg(2+) is bound by residues Asp213 and Asp232. Residues Ser251 and Lys280 each contribute to the 4-amino-2-methyl-5-(diphosphooxymethyl)pyrimidine site. 2-[(2R,5Z)-2-carboxy-4-methylthiazol-5(2H)-ylidene]ethyl phosphate is bound at residue Gly307.

It belongs to the thiamine-phosphate synthase family. The cofactor is Mg(2+).

The enzyme catalyses 2-[(2R,5Z)-2-carboxy-4-methylthiazol-5(2H)-ylidene]ethyl phosphate + 4-amino-2-methyl-5-(diphosphooxymethyl)pyrimidine + 2 H(+) = thiamine phosphate + CO2 + diphosphate. It carries out the reaction 2-(2-carboxy-4-methylthiazol-5-yl)ethyl phosphate + 4-amino-2-methyl-5-(diphosphooxymethyl)pyrimidine + 2 H(+) = thiamine phosphate + CO2 + diphosphate. It catalyses the reaction 4-methyl-5-(2-phosphooxyethyl)-thiazole + 4-amino-2-methyl-5-(diphosphooxymethyl)pyrimidine + H(+) = thiamine phosphate + diphosphate. It functions in the pathway cofactor biosynthesis; thiamine diphosphate biosynthesis; thiamine phosphate from 4-amino-2-methyl-5-diphosphomethylpyrimidine and 4-methyl-5-(2-phosphoethyl)-thiazole: step 1/1. Condenses 4-methyl-5-(beta-hydroxyethyl)thiazole monophosphate (THZ-P) and 2-methyl-4-amino-5-hydroxymethyl pyrimidine pyrophosphate (HMP-PP) to form thiamine monophosphate (TMP). The sequence is that of Thiamine-phosphate synthase from Synechococcus sp. (strain CC9605).